Reading from the N-terminus, the 1691-residue chain is ADAMTS-like protein 3 (1691 aa).

The signal sequence occupies residues 1-26 (MASWTSPWWVLIGMVFMHSPLPQTTA). Positions 75–124 (DGNWDAWGDWSDCSRTCGGGASYSLRRCLTGRNCEGQNIRYKTCSNHDCP) constitute a TSP type-1 1 domain. 3 disulfide bridges follow: C87–C118, C91–C123, and C102–C108. A glycan (N-linked (GlcNAc...) asparagine) is linked at N293. 3 TSP type-1 domains span residues 418 to 468 (PLPR…APKP), 478 to 535 (DCPK…IPCY), and 564 to 626 (EEPT…EACD). Cystine bridges form between C576-C620, C580-C625, and C591-C609. N681 carries N-linked (GlcNAc...) asparagine glycosylation. TSP type-1 domains are found at residues 703 to 760 (CPPR…FDCP), 763 to 818 (WHIE…ARTD), and 819 to 881 (CPPH…PECS). Residue N797 is glycosylated (N-linked (GlcNAc...) asparagine). 3 disulfide bridges follow: C831/C875, C835/C880, and C846/C863. Residues 896-992 (PQILSVQRVY…IAGSAQETVV (97 aa)) form the Ig-like C2-type 1 domain. N-linked (GlcNAc...) asparagine glycans are attached at residues N915 and N927. A disulfide bridge links C934 with C982. N-linked (GlcNAc...) asparagine glycosylation occurs at N1102. Positions 1146-1184 (PPAAQLRGETGSVSQSSHAKNSGKLTFKPKGPVLMRQSQ) are disordered. Over residues 1156–1169 (GSVSQSSHAKNSGK) the composition is skewed to polar residues. One can recognise an Ig-like C2-type 2 domain in the interval 1185–1279 (PPSISFNKTI…GSDVESSSVL (95 aa)). N-linked (GlcNAc...) asparagine glycosylation occurs at N1191. An intrachain disulfide couples C1215 to C1263. 10 N-linked (GlcNAc...) asparagine glycosylation sites follow: N1292, N1316, N1330, N1343, N1349, N1356, N1432, N1516, N1574, and N1591. An Ig-like C2-type 3 domain is found at 1296-1378 (PEHNHLSVVV…ATNALGKAVA (83 aa)). A disulfide bond links C1321 and C1367. TSP type-1 domains follow at residues 1424 to 1482 (QEPF…NIRD) and 1483 to 1545 (CPAR…HPCV). Positions 1597–1644 (CDVCWHTGPWKPCTAACGRGFQSRKVDCIHTRSCKPVAKRHCVQKKKP) constitute a TSP type-1 10 domain. The region spanning 1655-1691 (CDRDCTDTTHYCMFVKHLNLCSLDRYKQRCCQSCQEG) is the PLAC domain.

Post-translationally, glycosylated. Can be O-fucosylated by POFUT2 on a serine or a threonine residue found within the consensus sequence C1-X(2)-(S/T)-C2-G of the TSP type-1 repeat domains where C1 and C2 are the first and second cysteine residue of the repeat, respectively. Fucosylated repeats can then be further glycosylated by the addition of a beta-1,3-glucose residue by the glucosyltransferase, B3GALTL. Fucosylation mediates the efficient secretion of ADAMTS family members. Can also be C-glycosylated with one or two mannose molecules on tryptophan residues within the consensus sequence W-X-X-W of the TPRs, and N-glycosylated. These other glycosylations can also facilitate secretion. As to expression, expressed in epithelial cells of the colon, fallopian tube, skin, breast, prostate, epididymis, liver, pancreatic islets and bile ducts, as well as by vascular endothelial cells, smooth muscle cells, fibroblasts, cortical and ganglionic neurons and cardiac myocytes. Also expressed by malignant epithelial cells in colon cancer, as well as breast, prostate, renal and skin tumors. Expression is significantly reduced in colon cancer compared to normal colon.

It localises to the secreted. The protein resides in the extracellular space. The protein localises to the extracellular matrix. The chain is ADAMTS-like protein 3 (ADAMTSL3) from Homo sapiens (Human).